Here is a 459-residue protein sequence, read N- to C-terminus: tRNA modification GTPase MnmE (459 aa).

Positions 22, 85, and 124 each coordinate (6S)-5-formyl-5,6,7,8-tetrahydrofolate. One can recognise a TrmE-type G domain in the interval 221-380 (GLSTVIVGRP…LEIQIKDLFF (160 aa)). A K(+)-binding site is contributed by asparagine 231. GTP contacts are provided by residues 231–236 (NVGKSS), 250–256 (TEVAGTT), and 275–278 (DTAG). Serine 235 provides a ligand contact to Mg(2+). K(+) is bound by residues threonine 250, valine 252, and threonine 255. Threonine 256 contributes to the Mg(2+) binding site. Lysine 459 serves as a coordination point for (6S)-5-formyl-5,6,7,8-tetrahydrofolate.

Belongs to the TRAFAC class TrmE-Era-EngA-EngB-Septin-like GTPase superfamily. TrmE GTPase family. In terms of assembly, homodimer. Heterotetramer of two MnmE and two MnmG subunits. It depends on K(+) as a cofactor.

It is found in the cytoplasm. Its function is as follows. Exhibits a very high intrinsic GTPase hydrolysis rate. Involved in the addition of a carboxymethylaminomethyl (cmnm) group at the wobble position (U34) of certain tRNAs, forming tRNA-cmnm(5)s(2)U34. In Staphylococcus epidermidis (strain ATCC 35984 / DSM 28319 / BCRC 17069 / CCUG 31568 / BM 3577 / RP62A), this protein is tRNA modification GTPase MnmE.